The following is a 384-amino-acid chain: FAD-dependent urate hydroxylase (384 aa).

FAD is bound by residues Gly-11, 30–31 (EA), Ser-43, and Val-125. Residues Asn-178, Arg-204, and 216–218 (YFF) each bind substrate. FAD is bound by residues Asp-285 and 295-299 (GQGGC).

The protein belongs to the FAD-dependent urate hydroxylase family. Requires FAD as cofactor.

The catalysed reaction is urate + NADH + O2 + H(+) = 5-hydroxyisourate + NAD(+) + H2O. The protein operates within purine metabolism; urate degradation. Catalyzes the hydroxylation of uric acid to 5-hydroxyisourate. The chain is FAD-dependent urate hydroxylase (hpxO) from Klebsiella pneumoniae.